Consider the following 141-residue polypeptide: D-aminoacyl-tRNA deacylase (141 aa).

A Gly-cisPro motif, important for rejection of L-amino acids motif is present at residues 133 to 134; sequence GP.

It belongs to the DTD family. Homodimer.

The protein localises to the cytoplasm. It catalyses the reaction glycyl-tRNA(Ala) + H2O = tRNA(Ala) + glycine + H(+). The enzyme catalyses a D-aminoacyl-tRNA + H2O = a tRNA + a D-alpha-amino acid + H(+). An aminoacyl-tRNA editing enzyme that deacylates mischarged D-aminoacyl-tRNAs. Also deacylates mischarged glycyl-tRNA(Ala), protecting cells against glycine mischarging by AlaRS. Acts via tRNA-based rather than protein-based catalysis; rejects L-amino acids rather than detecting D-amino acids in the active site. By recycling D-aminoacyl-tRNA to D-amino acids and free tRNA molecules, this enzyme counteracts the toxicity associated with the formation of D-aminoacyl-tRNA entities in vivo and helps enforce protein L-homochirality. In Streptomyces coelicolor (strain ATCC BAA-471 / A3(2) / M145), this protein is D-aminoacyl-tRNA deacylase.